The chain runs to 204 residues: Nascent polypeptide-associated complex subunit alpha (204 aa).

A compositionally biased stretch (basic and acidic residues) spans 1 to 19; that stretch reads MADPRVEELPDEEVPKANV. Disordered stretches follow at residues 1-47 and 118-167; these read MADP…IHSR and QLAA…GLEA. Over residues 22–32 the composition is skewed to acidic residues; the sequence is AGSDSESEAGE. The NAC-A/B domain maps to 46–111; sequence SRNEKKARKA…AKIEDLNSQA (66 aa). The span at 118-128 shows a compositional bias: low complexity; it reads QLAAAEAAAGE. Positions 129 to 151 are enriched in basic and acidic residues; that stretch reads HAGHDHDHDHGKGKAPETEAKKE. Acidic residues predominate over residues 152 to 164; sequence EEEDDGEEVDETG. Residues 165–204 form the UBA domain; it reads LEAKDIELVMAQANVSRKKAVKALRENDNDIVNSIMALSI.

The protein belongs to the NAC-alpha family. In terms of assembly, part of the nascent polypeptide-associated complex (NAC), consisting of egd2 and egd1. NAC associates with ribosomes via egd1.

It is found in the cytoplasm. The protein resides in the nucleus. In terms of biological role, component of the nascent polypeptide-associated complex (NAC), a dynamic component of the ribosomal exit tunnel, protecting the emerging polypeptides from interaction with other cytoplasmic proteins to ensure appropriate nascent protein targeting. The NAC complex also promotes mitochondrial protein import by enhancing productive ribosome interactions with the outer mitochondrial membrane and blocks the inappropriate interaction of ribosomes translating non-secretory nascent polypeptides with translocation sites in the membrane of the endoplasmic reticulum. Egd2 may also be involved in transcription regulation. The polypeptide is Nascent polypeptide-associated complex subunit alpha (egd2) (Aspergillus fumigatus (strain ATCC MYA-4609 / CBS 101355 / FGSC A1100 / Af293) (Neosartorya fumigata)).